A 119-amino-acid polypeptide reads, in one-letter code: uncharacterized protein (119 aa).

Transmembrane regions (helical) follow at residues 52-72 (IVLF…VINI) and 88-108 (VLFS…IFLI).

The protein resides in the membrane. This is an uncharacterized protein from Dictyostelium discoideum (Social amoeba).